The chain runs to 467 residues: Cysteine protease ATG4a (467 aa).

A disordered region spans residues 1–35 (MKALCDRFVPQQCSSSSKSDTHDKSPLVSDSGPSD). Cysteine 170 serves as the catalytic Nucleophile. Active-site residues include aspartate 364 and histidine 366. The segment at 448–467 (NYGFADDDSEDEREDDWQML) is disordered. The span at 452–467 (ADDDSEDEREDDWQML) shows a compositional bias: acidic residues.

This sequence belongs to the peptidase C54 family. In terms of assembly, interacts with ATG8. In terms of tissue distribution, constitutively expressed.

The protein resides in the cytoplasm. The enzyme catalyses [protein]-C-terminal L-amino acid-glycyl-phosphatidylethanolamide + H2O = [protein]-C-terminal L-amino acid-glycine + a 1,2-diacyl-sn-glycero-3-phosphoethanolamine. In terms of biological role, cysteine protease that plays a key role in autophagy by mediating both proteolytic activation and delipidation of ATG8 family proteins. The protease activity is required for proteolytic activation of ATG8 family proteins: cleaves the C-terminal amino acid of ATG8 proteins to reveal a C-terminal glycine. Exposure of the glycine at the C-terminus is essential for ATG8 proteins conjugation to phosphatidylethanolamine (PE) and insertion to membranes, which is necessary for autophagy. In addition to the protease activity, also mediates delipidation of PE-conjugated ATG8 proteins. This is Cysteine protease ATG4a from Arabidopsis thaliana (Mouse-ear cress).